Reading from the N-terminus, the 162-residue chain is Protein A49 (162 aa).

The protein belongs to the poxviridae A49 protein family.

This is Protein A49 from Homo sapiens (Human).